Consider the following 813-residue polypeptide: Calpain-7 (813 aa).

Residue Met-1 is modified to N-acetylmethionine. Thr-95 is subject to Phosphothreonine. The region spanning 232–540 (RERFAYPMPF…YDVVYLSWNP (309 aa)) is the Calpain catalytic domain. Active-site residues include Cys-290, His-458, and Asn-478. The segment at 541-701 (ALFKESTCIH…INGKWSGQSA (161 aa)) is domain III. The segment at 702 to 813 (GGCGNFQETH…TVPIKTTQLQ (112 aa)) is domain N.

Belongs to the peptidase C2 family. In terms of tissue distribution, ubiquitous.

The protein localises to the nucleus. In terms of biological role, calcium-regulated non-lysosomal thiol-protease. In Mus musculus (Mouse), this protein is Calpain-7 (Capn7).